The chain runs to 83 residues: MAENTQVDVSRLTFERAIEELETIVKRLEDGKVPLEESVTIYERGEALKRRCEELLRQAEARVDKITTDASGQATGTAPLDVQ.

This sequence belongs to the XseB family. Heterooligomer composed of large and small subunits.

Its subcellular location is the cytoplasm. It catalyses the reaction Exonucleolytic cleavage in either 5'- to 3'- or 3'- to 5'-direction to yield nucleoside 5'-phosphates.. In terms of biological role, bidirectionally degrades single-stranded DNA into large acid-insoluble oligonucleotides, which are then degraded further into small acid-soluble oligonucleotides. This chain is Exodeoxyribonuclease 7 small subunit, found in Bradyrhizobium diazoefficiens (strain JCM 10833 / BCRC 13528 / IAM 13628 / NBRC 14792 / USDA 110).